The primary structure comprises 435 residues: AP-2 complex subunit mu (435 aa).

The MHD domain maps to 170 to 434 (RNELFLDVLE…IGRSGIYETR (265 aa)). Lys-341, Lys-345, and Lys-354 together coordinate a 1,2-diacyl-sn-glycero-3-phospho-(1D-myo-inositol-3,4,5-trisphosphate).

This sequence belongs to the adaptor complexes medium subunit family. As to quaternary structure, adaptor protein complex 2 (AP-2) is a heterotetramer composed of two large adaptins (alpha-type subunit and beta-type subunit), a medium adaptin (mu-type subunit) and a small adaptin (sigma-type subunit).

Its subcellular location is the cell membrane. The protein localises to the membrane. It localises to the coated pit. In terms of biological role, component of the adaptor complexes which link clathrin to receptors in coated vesicles. Clathrin-associated protein complexes are believed to interact with the cytoplasmic tails of membrane proteins, leading to their selection and concentration. AP50 is a subunit of the plasma membrane adaptor. The complex binds polyphosphoinositide-containing lipids. The polypeptide is AP-2 complex subunit mu (ap2m1) (Xenopus tropicalis (Western clawed frog)).